A 1036-amino-acid polypeptide reads, in one-letter code: Lethal(2) giant larvae protein homolog 1 (1036 aa).

10 WD repeats span residues 38-71, 78-119, 139-175, 199-233, 239-271, 289-331, 339-373, 395-473, 517-592, and 601-662; these read SALA…FTGL, VTQM…GLSF, VTVV…GQTL, SLQG…EHVF, LESL…GSPP, AINK…ETLV, VIDF…VLDL, TCSA…YKLS, QKVA…RMLI, and TAVT…LRQS. Serine 662 is modified (phosphoserine). Basic residues predominate over residues 667–677; it reads RKSRVSGKKRT. Residues 667–688 are disordered; it reads RKSRVSGKKRTPAASSKLQEAN. The span at 679 to 688 shows a compositional bias: polar residues; the sequence is AASSKLQEAN. WD repeat units lie at residues 722-782, 791-843, 848-901, and 915-938; these read VRCL…KEVQ, AIAV…VSAK, LTAH…VHYS, and VFTR…SLSA. Position 957 is a phosphothreonine (threonine 957). 3 positions are modified to phosphoserine: serine 964, serine 982, and serine 989. The tract at residues 980–1002 is disordered; sequence PESCEGSPSSAHSKRADTMEPPE.

This sequence belongs to the WD repeat L(2)GL family. Associated with nonmuscle myosin II heavy chain. Interacts with PRKCI/aPKC, PARD6B/Par-6 and PARD6A. Interacts with STX4A. Interacts with RAB10 (GDP-bound form); the interaction is direct and promotes RAB10 association with membranes and activation through competition with the Rab inhibitor GDI1. Interacts with DCAF1. Phosphorylated by PRKCI. Widely expressed. Expressed in brain, ovary, testis, with moderate expression in lever, uterus, lung and kidney.

It localises to the early endosome membrane. The protein localises to the golgi apparatus. It is found in the trans-Golgi network membrane. The protein resides in the cell projection. Its subcellular location is the axon. It localises to the golgi apparatus membrane. The protein localises to the cytoplasm. It is found in the cytoskeleton. Functionally, cortical cytoskeleton protein found in a complex involved in maintaining cell polarity and epithelial integrity. Involved in the regulation of mitotic spindle orientation, proliferation, differentiation and tissue organization of neuroepithelial cells. Involved in axonogenesis through RAB10 activation thereby regulating vesicular membrane trafficking toward the axonal plasma membrane. The protein is Lethal(2) giant larvae protein homolog 1 (LLGL1) of Bos taurus (Bovine).